The chain runs to 705 residues: MESEAIQEDLQNLDVELKDVQGQISALIEHQDRLYERKSELKTLLKALAASGSPVASSGGSSAIENWSETFEWDSRADDVRFNVFGISKYRANQKEIINAIMTGRDVLVIMAAGGGKSLCYQLPAMLRGGTTLVVSPLLSLIQDQVMGLAALGISAYMLTSTSGKENEKFVYKALEKGEDDLKILYVTPEKVSKSKRFMSKLEKCHNAGRLSLISIDEAHCCSQWGHDFRPDYKNLSILKTQFPKVPMVALTATATQKVQNDLIEMLHIPKCVKFVSSVNRPNLFYSVREKSAVGKLVVDEIAEFIRESYSNNESGIVYCFSRKECEQIAGDLRERGISADYYHADMDANMREKVHMRWSKNKLQVIVGTVAFGMGINKPDVRFVIHHSLSKSMETYYQESGRAGRDGLPSECILFFRSADVPRQSSMVFYEYSGLQNLYDIVRYCQSKTKCRRSAFFRHFGEPSQDCNGMCDNCALSSEVKEVDVSDLSKLVVSMVQETQAKDQRVTMLQLGDKLRNKHKDLIAELKRDEVEHLVIKLIVDSVLKEEFQHTPYSTNAYVTMGPLANQLLQGRKTIKMETSSRQTKKLKRSITFSGLELKLDELRKEISAADGSILPHTVLSTQQIGSISSQKPVSLQELESIIGKLKTEKYGDRILEEVMRHEAVSEQLVEDPTKEETCKSRLRKRAKTQKDVVLVESSGEEEA.

Residues 1–30 adopt a coiled-coil conformation; it reads MESEAIQEDLQNLDVELKDVQGQISALIEH. The Helicase ATP-binding domain occupies 98–273; it reads INAIMTGRDV…IEMLHIPKCV (176 aa). 111–118 is an ATP binding site; sequence MAAGGGKS. Residues 217 to 220 carry the DEAH box motif; the sequence is DEAH. One can recognise a Helicase C-terminal domain in the interval 298 to 450; that stretch reads VVDEIAEFIR…DIVRYCQSKT (153 aa). The region spanning 591–670 is the HRDC domain; it reads SITFSGLELK…MRHEAVSEQL (80 aa). Residues 668-705 form a disordered region; that stretch reads EQLVEDPTKEETCKSRLRKRAKTQKDVVLVESSGEEEA.

Belongs to the helicase family. RecQ subfamily. Interacts with WEX. Mg(2+) is required as a cofactor. It depends on Mn(2+) as a cofactor. Expressed in shoots and flowers. Expressed in young leaves, inflorescences, roots, shoot apical meristem, young siliques, and mature green siliques.

The protein localises to the nucleus. The enzyme catalyses Couples ATP hydrolysis with the unwinding of duplex DNA by translocating in the 3'-5' direction.. It carries out the reaction ATP + H2O = ADP + phosphate + H(+). Its function is as follows. 3'-5' DNA helicase that may play a role in the repair of DNA. Its DNA unwinding activity in vitro is dependent on magnesium, and ATP or dATP. Can use GTP/dGTP, CTP/dCTP or UTP/dUTP as nucleotide cofactors. Catalyzes Holliday junction branch migration and replication fork regression. Disrupts D-loop structures. Unwinds G-quadruplex DNA, found in telomeric DNA. The protein is ATP-dependent DNA helicase Q-like 2 of Arabidopsis thaliana (Mouse-ear cress).